The following is a 1125-amino-acid chain: Transient receptor potential cation channel subfamily A member 1 (1125 aa).

Residues 1–721 lie on the Cytoplasmic side of the membrane; that stretch reads MKRSLRRVLR…KWCAYGFRAH (721 aa). ANK repeat units follow at residues 63-94, 98-127, 131-161, 165-194, 198-227, 239-268, 272-301, 309-338, and 342-371; these read ENLC…ALNV, YGNT…NPNL, NMMA…NINL, NGNT…KLCK, WGDY…KTGY, KKAS…HIDM, AKCM…GSSD, NQET…DINS, and EGRS…KVDI. 5 cysteine pairs are disulfide-bonded: Cys193-Cys666, Cys463-Cys666, Cys609-Cys622, Cys622-Cys666, and Cys634-Cys859. Pro395 bears the 4-hydroxyproline; transient mark. 5 ANK repeats span residues 413 to 442, 446 to 475, 482 to 511, 514 to 543, and 548 to 577; these read DGCT…SVHS, DKKS…DTRL, HGMT…LFLS, NGWT…KCTD, and EGNT…DILL. (E)-cinnamaldehyde-binding residues include Cys415 and Cys422. Cys622 contributes to the (E)-cinnamaldehyde binding site. Cysteine sulfenic acid (-SOH); transient; in hyperoxia is present on Cys634. (E)-cinnamaldehyde contacts are provided by Cys642, Cys666, and Lys712. The chain crosses the membrane as a helical span at residues 722-742; it reads MMNLGSYCLGLIPMTLLVVKI. At 743–767 the chain is on the extracellular side; the sequence is QPGMAFNSTGIINETISTHEERINT. Residues Asn749 and Asn755 are each glycosylated (N-linked (GlcNAc...) asparagine). Residues 768 to 788 traverse the membrane as a helical segment; sequence LNSFPLKICMILVFLSSIFGY. The Cytoplasmic portion of the chain corresponds to 789-806; it reads CKEVVQIFQQKRNYFLDY. Ca(2+)-binding residues include Glu791, Gln794, Asn808, and Glu811. A helical membrane pass occupies residues 807 to 827; the sequence is NNALEWVIYTTSMIFVLPLFL. Over 828–832 the chain is Extracellular; it reads DIPAY. A helical membrane pass occupies residues 833-853; that stretch reads MQWQCGAIAIFFYWMNFLLYL. At 854–876 the chain is on the cytoplasmic side; it reads QRFENCGIFIVMLEVIFKTLLRS. Cys859 carries the cysteine sulfenic acid (-SOH); transient; in hyperoxia modification. A helical transmembrane segment spans residues 877 to 897; it reads TGVFIFLLLAFGLSFYVLLNF. The Extracellular segment spans residues 898-904; it reads QDAFSTP. Positions 905–925 form an intramembrane region, pore-forming; sequence LLSLIQTFSMMLGDINYRDAF. Topologically, residues 926–937 are extracellular; that stretch reads LEPLFRNELAYP. Residues 938-959 traverse the membrane as a helical segment; sequence VLTFGQLIAFTMFVPIVLMNLL. Over 960 to 1125 the chain is Cytoplasmic; it reads IGLAVGDIAE…THCSISHPDI (166 aa). A coiled-coil region spans residues 1044–1073; the sequence is MEILKQKYRLKDLTSLLEKQHELIKLIIQK. 1048 to 1054 serves as a coordination point for a 1,2-diacyl-sn-glycero-3-phospho-(1D-myo-inositol); sequence KQKYRLK.

This sequence belongs to the transient receptor (TC 1.A.4) family. In terms of assembly, homotetramer. Interacts with TMEM100. Interacts with EGLN1. Interacts with the scorpion wasabi receptor toxin at the same site that electrophiles but in a non-covalent manner. TRPA1 activation by electrophiles occurs though covalent modification of specific cysteine residues in the N-terminal cytoplasmic domain. Post-translationally, hydroxylation is required for TRPA1 activity inhibition in normoxia. In hypoxia, the decrease in oxygen concentration diminishes the activity of the hydroxylase EGLN1, thus relieving TRPA1 from inhibition and ultimately leading to channel activation. In terms of processing, oxidation of Cys-634 and Cys-859 in hyperoxia may override the hydroxylase EGLN1-mediated inhibition, causing TRPA1 activation. Specifically expressed in a subset of nociceptive neurons. Expressed in dorsal root ganglia.

The protein resides in the cell membrane. The enzyme catalyses Ca(2+)(in) = Ca(2+)(out). It catalyses the reaction Mg(2+)(in) = Mg(2+)(out). The catalysed reaction is Na(+)(in) = Na(+)(out). It carries out the reaction K(+)(in) = K(+)(out). The enzyme catalyses Zn(2+)(in) = Zn(2+)(out). Electrophilic ligands activate the channel by covalent modification of intracellular cysteines; Cys-622 plays a key role in covalent binding of electrophiles. Extracellular Ca(2+) both potentiates and inactivates TRPA1; a rapid potentiation follows by slow desensitization. Activated by increase in intracellular Ca(2+) concentration. Inhibited by ruthenium red, a potent blocker of TRPV channels and selectively by A-967079. Activated by benzyl isothiocyanate (BITC), iodoacetamide, sulfhydryl reactive agent MTSEA, N-methyl maleimide (NMM), N-ethylmaleimide (NEM), and 2-aminoethyldiphenylborinate (2-APB). Also activated by hyperoxia. Acivated by intracellular Zn(2+). TRPA1 activation may critically depend on the presence of small intracellular compounds such as polyphosphates. Ligand-activated Ca(2+)-permeable, nonselective cation channel. Involved in pain detection and possibly also in cold perception, oxygen concentration perception, cough, itch, and inner ear function. Has a relatively high Ca(2+) selectivity, with a preference for divalent over monovalent cations (Ca(2+) &gt; Ba(2+) &gt; Mg(2+) &gt; NH4(+) &gt; Li(+) &gt; K(+)), the influx of cation into the cytoplasm, leads to membrane depolarization. Has a central role in the pain response to endogenous inflammatory mediators, such as bradykinin and to a diverse array of irritants. Activated by a large variety of structurally unrelated electrophilic and non-electrophilic chemical compounds, such as allylthiocyanate (AITC) from mustard oil or wasabi, cinnamaldehyde, diallyl disulfide (DADS) from garlic, and acrolein, an environmental irritant. Electrophilic ligands activate TRPA1 by interacting with critical N-terminal Cys residues in a covalent manner. Non-electrophile agonists bind at distinct sites in the transmembrane domain to promote channel activation. Also acts as an ionotropic cannabinoid receptor by being activated by delta(9)-tetrahydrocannabinol (THC), the psychoactive component of marijuana. May be a component for the mechanosensitive transduction channel of hair cells in inner ear, thereby participating in the perception of sounds. This chain is Transient receptor potential cation channel subfamily A member 1, found in Rattus norvegicus (Rat).